Reading from the N-terminus, the 179-residue chain is Large ribosomal subunit protein uL5 (179 aa).

Belongs to the universal ribosomal protein uL5 family. As to quaternary structure, part of the 50S ribosomal subunit; part of the 5S rRNA/L5/L18/L25 subcomplex. Contacts the 5S rRNA and the P site tRNA. Forms a bridge to the 30S subunit in the 70S ribosome.

Functionally, this is one of the proteins that bind and probably mediate the attachment of the 5S RNA into the large ribosomal subunit, where it forms part of the central protuberance. In the 70S ribosome it contacts protein S13 of the 30S subunit (bridge B1b), connecting the 2 subunits; this bridge is implicated in subunit movement. Contacts the P site tRNA; the 5S rRNA and some of its associated proteins might help stabilize positioning of ribosome-bound tRNAs. This chain is Large ribosomal subunit protein uL5, found in Shewanella loihica (strain ATCC BAA-1088 / PV-4).